Reading from the N-terminus, the 488-residue chain is ATP synthase subunit beta (488 aa).

An ATP-binding site is contributed by 164 to 171 (GGAGMGKT).

It belongs to the ATPase alpha/beta chains family. As to quaternary structure, F-type ATPases have 2 components, CF(1) - the catalytic core - and CF(0) - the membrane proton channel. CF(1) has five subunits: alpha(3), beta(3), gamma(1), delta(1), epsilon(1). CF(0) has four main subunits: a(1), b(1), b'(1) and c(9-12).

Its subcellular location is the cellular thylakoid membrane. The catalysed reaction is ATP + H2O + 4 H(+)(in) = ADP + phosphate + 5 H(+)(out). Its function is as follows. Produces ATP from ADP in the presence of a proton gradient across the membrane. The catalytic sites are hosted primarily by the beta subunits. This chain is ATP synthase subunit beta, found in Synechococcus sp. (strain RCC307).